A 164-amino-acid polypeptide reads, in one-letter code: Lipoprotein signal peptidase (164 aa).

Helical transmembrane passes span 6–26 (LGIL…LWLL), 39–59 (VTSF…GWFA), 65–85 (GQIL…IWMA), and 88–108 (TTKL…GNAI). Catalysis depends on residues aspartate 118 and aspartate 140. The chain crosses the membrane as a helical span at residues 141–161 (VAIVVGVVALLYDSLIGAPAV).

Belongs to the peptidase A8 family.

It localises to the cell inner membrane. It carries out the reaction Release of signal peptides from bacterial membrane prolipoproteins. Hydrolyzes -Xaa-Yaa-Zaa-|-(S,diacylglyceryl)Cys-, in which Xaa is hydrophobic (preferably Leu), and Yaa (Ala or Ser) and Zaa (Gly or Ala) have small, neutral side chains.. Its pathway is protein modification; lipoprotein biosynthesis (signal peptide cleavage). This protein specifically catalyzes the removal of signal peptides from prolipoproteins. This is Lipoprotein signal peptidase from Rhodopseudomonas palustris (strain TIE-1).